Consider the following 79-residue polypeptide: Calcium/calmodulin-dependent protein kinase II inhibitor 2 (79 aa).

An inhibitory domain region spans residues 43 to 69; it reads KRPPKLGQIGRAKRVVIEDDRIDEVLK.

Belongs to the CAMK2N family.

The protein localises to the nucleus. It localises to the cytoplasm. It is found in the cytosol. Its function is as follows. Potent and specific cellular inhibitor of CaM-kinase II (CAMK2). Traps Ca(2+)/calmodulin on CAMK2. The polypeptide is Calcium/calmodulin-dependent protein kinase II inhibitor 2 (camk2n2) (Xenopus laevis (African clawed frog)).